The chain runs to 169 residues: Nucleoside-triphosphatase THEP1 (169 aa).

Residues Gly11–Thr18 and Ile100–Gly107 contribute to the ATP site.

It belongs to the THEP1 NTPase family.

It catalyses the reaction a ribonucleoside 5'-triphosphate + H2O = a ribonucleoside 5'-diphosphate + phosphate + H(+). In terms of biological role, has nucleotide phosphatase activity towards ATP, GTP, CTP, TTP and UTP. May hydrolyze nucleoside diphosphates with lower efficiency. The sequence is that of Nucleoside-triphosphatase THEP1 from Sulfurisphaera tokodaii (strain DSM 16993 / JCM 10545 / NBRC 100140 / 7) (Sulfolobus tokodaii).